We begin with the raw amino-acid sequence, 1526 residues long: DNA topoisomerase 2-alpha (1526 aa).

Residue methionine 1 is modified to N-acetylmethionine. The disordered stretch occupies residues 1–21 (MELSPLQPVNENMQMNKKKNE). Serine 4 carries the phosphoserine modification. Lysine 17 is covalently cross-linked (Glycyl lysine isopeptide (Lys-Gly) (interchain with G-Cter in SUMO2)). Residues asparagine 90, asparagine 119, and 147-149 (SSN) each bind ATP. Residues lysine 155 and lysine 156 each participate in a glycyl lysine isopeptide (Lys-Gly) (interchain with G-Cter in SUMO2) cross-link. 160-167 (GRNGYGAK) provides a ligand contact to ATP. Lysine 260 participates in a covalent cross-link: Glycyl lysine isopeptide (Lys-Gly) (interchain with G-Cter in SUMO2). At threonine 281 the chain carries Phosphothreonine. Residues 341–343 (KKK) form an interaction with DNA region. Lysine 351 participates in a covalent cross-link: Glycyl lysine isopeptide (Lys-Gly) (interchain with G-Cter in SUMO2). 375–377 (QTK) serves as a coordination point for ATP. Residues lysine 385, lysine 396, lysine 415, lysine 417, lysine 424, and lysine 439 each participate in a glycyl lysine isopeptide (Lys-Gly) (interchain with G-Cter in SUMO2) cross-link. A Toprim domain is found at 454–571 (CTLILTEGDS…SLLRHRFLEE (118 aa)). Glutamate 460 provides a ligand contact to Mg(2+). Glycyl lysine isopeptide (Lys-Gly) (interchain with G-Cter in SUMO2) cross-links involve residues lysine 465, lysine 479, and lysine 528. Aspartate 540 and aspartate 542 together coordinate Mg(2+). Glycyl lysine isopeptide (Lys-Gly) (interchain with G-Cter in SUMO2) cross-links involve residues lysine 583, lysine 598, lysine 613, lysine 621, lysine 624, lysine 631, lysine 638, lysine 654, lysine 661, and lysine 675. The Topo IIA-type catalytic domain maps to 714 to 1166 (IPSMVDGLKP…SPSDLWKEDL (453 aa)). Tyrosine 804 (O-(5'-phospho-DNA)-tyrosine intermediate) is an active-site residue. Residues 989-998 (KLQTSLTCNS) form an interaction with DNA region. Residue lysine 1074 forms a Glycyl lysine isopeptide (Lys-Gly) (interchain with G-Cter in SUMO2) linkage. 2 disordered regions span residues 1089-1117 (WKEA…AESG) and 1180-1217 (EKQD…VIPQ). Acidic residues predominate over residues 1098-1109 (DEEENEESDNEN). Position 1105 is a phosphoserine; by CK1 (serine 1105). Residues lysine 1191 and lysine 1199 each participate in a glycyl lysine isopeptide (Lys-Gly) (interchain with G-Cter in SUMO2) cross-link. Phosphoserine is present on serine 1208. A Glycyl lysine isopeptide (Lys-Gly) (interchain with G-Cter in SUMO2) cross-link involves residue lysine 1223. Residues 1233–1526 (KIKSENVEGT…LEESDDDDLF (294 aa)) form a disordered region. Residue lysine 1235 forms a Glycyl lysine isopeptide (Lys-Gly) (interchain with G-Cter in SUMO1); alternate linkage. Lysine 1235 is covalently cross-linked (Glycyl lysine isopeptide (Lys-Gly) (interchain with G-Cter in SUMO2); alternate). At threonine 1242 the chain carries Phosphothreonine. Lysine 1254 is covalently cross-linked (Glycyl lysine isopeptide (Lys-Gly) (interchain with G-Cter in SUMO2)). Residues 1255–1265 (QRIEKKQKKEP) are compositionally biased toward basic and acidic residues. Glycyl lysine isopeptide (Lys-Gly) (interchain with G-Cter in SUMO2) cross-links involve residues lysine 1271, lysine 1278, and lysine 1281. 4 positions are modified to phosphoserine: serine 1290, serine 1292, serine 1294, and serine 1297. Phosphothreonine is present on threonine 1322. The span at 1325-1344 (LDSDEDFSGSDGKDEDEDFF) shows a compositional bias: acidic residues. Phosphoserine is present on residues serine 1327 and serine 1332. At threonine 1349 the chain carries Phosphothreonine. Glycyl lysine isopeptide (Lys-Gly) (interchain with G-Cter in SUMO2) cross-links involve residues lysine 1358, lysine 1362, and lysine 1368. Phosphoserine occurs at positions 1369 and 1372. Lysine 1380 is covalently cross-linked (Glycyl lysine isopeptide (Lys-Gly) (interchain with G-Cter in SUMO2)). 2 positions are modified to phosphoserine: serine 1382 and serine 1386. Residues 1405–1426 (SKQTVAVKKTATKSQSSTSTAG) are compositionally biased toward low complexity. Lysine 1417 is covalently cross-linked (Glycyl lysine isopeptide (Lys-Gly) (interchain with G-Cter in SUMO2); alternate). An N6-acetyllysine; alternate modification is found at lysine 1417. Residues 1428–1434 (KKRAVPK) are interaction with PLSCR1. Residue lysine 1437 forms a Glycyl lysine isopeptide (Lys-Gly) (interchain with G-Cter in SUMO2); alternate linkage. The residue at position 1437 (lysine 1437) is an N6-acetyllysine; alternate. Residues lysine 1449 and lysine 1454 each participate in a glycyl lysine isopeptide (Lys-Gly) (interchain with G-Cter in SUMO2) cross-link. Serine 1464, serine 1466, serine 1469, and serine 1471 each carry phosphoserine. Residues lysine 1479 and lysine 1487 each participate in a glycyl lysine isopeptide (Lys-Gly) (interchain with G-Cter in SUMO2) cross-link. A compositionally biased stretch (basic and acidic residues) spans 1486-1497 (SKGENQDFRVDL). Serine 1520 bears the Phosphoserine mark.

It belongs to the type II topoisomerase family. Homodimer. Interacts with COPS5. Interacts with RECQL5; this stimulates DNA decatenation. Interacts with SETMAR; stimulates the topoisomerase activity. Interacts with DHX9; this interaction occurs in a E2 enzyme UBE2I- and RNA-dependent manner, negatively regulates DHX9-mediated double-stranded DNA and RNA duplex helicase activity and stimulates TOP2A-mediated supercoiled DNA relaxation activity. Interacts with HNRNPU (via C-terminus); this interaction protects the topoisomerase TOP2A from degradation and positively regulates the relaxation of supercoiled DNA in a RNA-dependent manner. Interacts with MCM3AP. Interacts with ERCC6. Interacts with PLSCR1. Interacts with GCNA; this interaction allows the resolution of topoisomerase II (TOP2A) DNA-protein cross-links. Interacts with POL1RA/RPA1 (via dock II) and UBTF in the context of Pol I complex; may assist Pol I transcription initiation by releasing supercoils occurring during DNA unwinding. Interacts with TPRN; TPRN interacts with a number of DNA damage response proteins, is recruited to sites of DNA damage and may play a role in DNA damage repair. Mg(2+) is required as a cofactor. Mn(2+) serves as cofactor. Requires Ca(2+) as cofactor. Post-translationally, phosphorylation has no effect on catalytic activity. However, phosphorylation at Ser-1105 by CSNK1D/CK1 promotes DNA cleavable complex formation.

The protein resides in the cytoplasm. The protein localises to the nucleus. It localises to the nucleoplasm. Its subcellular location is the nucleolus. It carries out the reaction ATP-dependent breakage, passage and rejoining of double-stranded DNA.. In terms of biological role, key decatenating enzyme that alters DNA topology by binding to two double-stranded DNA molecules, generating a double-stranded break in one of the strands, passing the intact strand through the broken strand, and religating the broken strand. May play a role in regulating the period length of BMAL1 transcriptional oscillation. In Cricetulus griseus (Chinese hamster), this protein is DNA topoisomerase 2-alpha (TOP2A).